The primary structure comprises 490 residues: Aspartyl/glutamyl-tRNA(Asn/Gln) amidotransferase subunit B (490 aa).

It belongs to the GatB/GatE family. GatB subfamily. Heterotrimer of A, B and C subunits.

It catalyses the reaction L-glutamyl-tRNA(Gln) + L-glutamine + ATP + H2O = L-glutaminyl-tRNA(Gln) + L-glutamate + ADP + phosphate + H(+). It carries out the reaction L-aspartyl-tRNA(Asn) + L-glutamine + ATP + H2O = L-asparaginyl-tRNA(Asn) + L-glutamate + ADP + phosphate + 2 H(+). Its function is as follows. Allows the formation of correctly charged Asn-tRNA(Asn) or Gln-tRNA(Gln) through the transamidation of misacylated Asp-tRNA(Asn) or Glu-tRNA(Gln) in organisms which lack either or both of asparaginyl-tRNA or glutaminyl-tRNA synthetases. The reaction takes place in the presence of glutamine and ATP through an activated phospho-Asp-tRNA(Asn) or phospho-Glu-tRNA(Gln). This Burkholderia mallei (strain NCTC 10247) protein is Aspartyl/glutamyl-tRNA(Asn/Gln) amidotransferase subunit B.